A 254-amino-acid polypeptide reads, in one-letter code: UPF0246 protein Fphi_1075 (254 aa).

This sequence belongs to the UPF0246 family.

This chain is UPF0246 protein Fphi_1075, found in Francisella philomiragia subsp. philomiragia (strain ATCC 25017 / CCUG 19701 / FSC 153 / O#319-036).